A 156-amino-acid chain; its full sequence is Cyanate hydratase (156 aa).

Active-site residues include R96, E99, and S122.

This sequence belongs to the cyanase family.

It carries out the reaction cyanate + hydrogencarbonate + 3 H(+) = NH4(+) + 2 CO2. Its function is as follows. Catalyzes the reaction of cyanate with bicarbonate to produce ammonia and carbon dioxide. This chain is Cyanate hydratase, found in Escherichia coli O9:H4 (strain HS).